The chain runs to 454 residues: Tyrosine aminotransferase (454 aa).

An N-acetylmethionine modification is found at M1. K280 carries the post-translational modification N6-(pyridoxal phosphate)lysine. The residue at position 448 (S448) is a Phosphoserine.

The protein belongs to the class-I pyridoxal-phosphate-dependent aminotransferase family. Homodimer. Requires pyridoxal 5'-phosphate as cofactor.

It carries out the reaction L-tyrosine + 2-oxoglutarate = 3-(4-hydroxyphenyl)pyruvate + L-glutamate. The protein operates within amino-acid degradation; L-phenylalanine degradation; acetoacetate and fumarate from L-phenylalanine: step 2/6. Transaminase involved in tyrosine breakdown. Converts tyrosine to p-hydroxyphenylpyruvate. Can catalyze the reverse reaction, using glutamic acid, with 2-oxoglutarate as cosubstrate (in vitro). Has much lower affinity and transaminase activity towards phenylalanine. The sequence is that of Tyrosine aminotransferase (TAT) from Homo sapiens (Human).